The chain runs to 364 residues: Uroporphyrinogen decarboxylase (364 aa).

Substrate-binding positions include 28 to 32 (RQAGR), D78, Y160, T215, and H333.

The protein belongs to the uroporphyrinogen decarboxylase family. As to quaternary structure, homodimer.

The protein localises to the cytoplasm. The catalysed reaction is uroporphyrinogen III + 4 H(+) = coproporphyrinogen III + 4 CO2. Its pathway is porphyrin-containing compound metabolism; protoporphyrin-IX biosynthesis; coproporphyrinogen-III from 5-aminolevulinate: step 4/4. Functionally, catalyzes the decarboxylation of four acetate groups of uroporphyrinogen-III to yield coproporphyrinogen-III. The sequence is that of Uroporphyrinogen decarboxylase from Burkholderia pseudomallei (strain 1106a).